We begin with the raw amino-acid sequence, 385 residues long: Iron uptake system component EfeM (385 aa).

Positions 1–22 (MNFTKIAVSAGCILALCAGCGA) are cleaved as a signal peptide.

Belongs to the EfeM/EfeO family. As to quaternary structure, component of the iron transporter efeUOB/M complex composed of EfeU, EfeM and EfeB; EfeU is essential for the complex formation.

Its subcellular location is the cell membrane. The protein resides in the membrane raft. Part of the iron transporter system efeUOB/M involved in iron import. Specifically binds Fe(3+), which is produced by EfeB-mediated oxidation of Fe(2+), and delivers it to the cell membrane permease EfeU. This chain is Iron uptake system component EfeM, found in Bacillus subtilis (strain 168).